The sequence spans 55 residues: ATP synthase F(0) complex subunit 8 (55 aa).

The helical transmembrane segment at 4-24 (LNPSPWLLILLFSWLIFLTML) threads the bilayer. The segment at 36–55 (MPSTQNMCKQEPEPWTWPWA) is disordered.

It belongs to the ATPase protein 8 family. As to quaternary structure, component of the ATP synthase complex composed at least of ATP5F1A/subunit alpha, ATP5F1B/subunit beta, ATP5MC1/subunit c (homooctomer), MT-ATP6/subunit a, MT-ATP8/subunit 8, ATP5ME/subunit e, ATP5MF/subunit f, ATP5MG/subunit g, ATP5MK/subunit k, ATP5MJ/subunit j, ATP5F1C/subunit gamma, ATP5F1D/subunit delta, ATP5F1E/subunit epsilon, ATP5PF/subunit F6, ATP5PB/subunit b, ATP5PD/subunit d, ATP5PO/subunit OSCP. ATP synthase complex consists of a soluble F(1) head domain (subunits alpha(3) and beta(3)) - the catalytic core - and a membrane F(0) domain - the membrane proton channel (subunits c, a, 8, e, f, g, k and j). These two domains are linked by a central stalk (subunits gamma, delta, and epsilon) rotating inside the F1 region and a stationary peripheral stalk (subunits F6, b, d, and OSCP).

The protein resides in the mitochondrion membrane. Subunit 8, of the mitochondrial membrane ATP synthase complex (F(1)F(0) ATP synthase or Complex V) that produces ATP from ADP in the presence of a proton gradient across the membrane which is generated by electron transport complexes of the respiratory chain. ATP synthase complex consist of a soluble F(1) head domain - the catalytic core - and a membrane F(1) domain - the membrane proton channel. These two domains are linked by a central stalk rotating inside the F(1) region and a stationary peripheral stalk. During catalysis, ATP synthesis in the catalytic domain of F(1) is coupled via a rotary mechanism of the central stalk subunits to proton translocation. In vivo, can only synthesize ATP although its ATP hydrolase activity can be activated artificially in vitro. Part of the complex F(0) domain. The protein is ATP synthase F(0) complex subunit 8 of Latimeria chalumnae (Coelacanth).